We begin with the raw amino-acid sequence, 291 residues long: ATP phosphoribosyltransferase 1 (291 aa).

This sequence belongs to the ATP phosphoribosyltransferase family. Long subfamily. It depends on Mg(2+) as a cofactor.

The protein resides in the cytoplasm. It carries out the reaction 1-(5-phospho-beta-D-ribosyl)-ATP + diphosphate = 5-phospho-alpha-D-ribose 1-diphosphate + ATP. Its pathway is amino-acid biosynthesis; L-histidine biosynthesis; L-histidine from 5-phospho-alpha-D-ribose 1-diphosphate: step 1/9. Its activity is regulated as follows. Feedback inhibited by histidine. Functionally, catalyzes the condensation of ATP and 5-phosphoribose 1-diphosphate to form N'-(5'-phosphoribosyl)-ATP (PR-ATP). Has a crucial role in the pathway because the rate of histidine biosynthesis seems to be controlled primarily by regulation of HisG enzymatic activity. This is ATP phosphoribosyltransferase 1 from Geobacter sulfurreducens (strain ATCC 51573 / DSM 12127 / PCA).